Consider the following 376-residue polypeptide: DNA replication and repair protein RecF (376 aa).

30-37 provides a ligand contact to ATP; it reads GNNAQGKS.

Belongs to the RecF family.

The protein resides in the cytoplasm. Its function is as follows. The RecF protein is involved in DNA metabolism; it is required for DNA replication and normal SOS inducibility. RecF binds preferentially to single-stranded, linear DNA. It also seems to bind ATP. In Trichormus variabilis (strain ATCC 29413 / PCC 7937) (Anabaena variabilis), this protein is DNA replication and repair protein RecF.